The chain runs to 194 residues: Adenylate kinase (194 aa).

Residue 10-15 participates in ATP binding; that stretch reads GAGKGT. Positions 30–59 are NMP; that stretch reads STGDMLRAAVAQQSEIGKRAKAVMDAGQLV. AMP is bound by residues threonine 31, arginine 36, 57–59, 85–88, and glutamine 92; these read QLV and GYPR. The interval 126-142 is LID; the sequence is SRVAETIAKGGQVRSDD. Arginine 127 lines the ATP pocket. The AMP site is built by arginine 139 and arginine 150. Residue alanine 178 participates in ATP binding.

Belongs to the adenylate kinase family. In terms of assembly, monomer.

The protein localises to the cytoplasm. The catalysed reaction is AMP + ATP = 2 ADP. It functions in the pathway purine metabolism; AMP biosynthesis via salvage pathway; AMP from ADP: step 1/1. Catalyzes the reversible transfer of the terminal phosphate group between ATP and AMP. Plays an important role in cellular energy homeostasis and in adenine nucleotide metabolism. The sequence is that of Adenylate kinase from Brucella anthropi (strain ATCC 49188 / DSM 6882 / CCUG 24695 / JCM 21032 / LMG 3331 / NBRC 15819 / NCTC 12168 / Alc 37) (Ochrobactrum anthropi).